We begin with the raw amino-acid sequence, 361 residues long: RNA 3'-terminal phosphate cyclase (361 aa).

ATP is bound by residues Gln105, Pro132, Tyr295, Asp298, Gln299, and His321. His321 (tele-AMP-histidine intermediate) is an active-site residue.

The protein belongs to the RNA 3'-terminal cyclase family. Type 1 subfamily.

It localises to the nucleus. Its subcellular location is the nucleoplasm. It catalyses the reaction a 3'-end 3'-phospho-ribonucleotide-RNA + ATP = a 3'-end 2',3'-cyclophospho-ribonucleotide-RNA + AMP + diphosphate. Its function is as follows. Catalyzes the conversion of 3'-phosphate to a 2',3'-cyclic phosphodiester at the end of RNA. The mechanism of action of the enzyme occurs in 3 steps: (A) adenylation of the enzyme by ATP; (B) transfer of adenylate to an RNA-N3'P to produce RNA-N3'PP5'A; (C) and attack of the adjacent 2'-hydroxyl on the 3'-phosphorus in the diester linkage to produce the cyclic end product. Likely functions in some aspects of cellular RNA processing. Function plays an important role in a RNA repair and splicing pathway which controls axon regeneration in response to peripheral (PNS) and central nervous system (CNS) injury. In response to axotomy, negatively regulates splicing of Xbp1 which in turn activates downstream effectors which inhibit axon regeneration, including down-regulating the microtubule regulators ringer and futsch. This is RNA 3'-terminal phosphate cyclase from Drosophila melanogaster (Fruit fly).